The sequence spans 458 residues: Bifunctional protein GlmU (458 aa).

Residues 1-229 (MTNYAIILAA…FNESLGVNDR (229 aa)) form a pyrophosphorylase region. UDP-N-acetyl-alpha-D-glucosamine is bound by residues 8 to 11 (LAAG), Lys22, Gln72, and 77 to 78 (GT). Asp102 is a Mg(2+) binding site. Residues Gly139, Glu154, Asn169, and Asn227 each coordinate UDP-N-acetyl-alpha-D-glucosamine. Asn227 contacts Mg(2+). Residues 230 to 250 (VALATAESVMRRRINKAHMIN) form a linker region. The interval 251–458 (GVTFQNPDAT…AKRLPHYPQK (208 aa)) is N-acetyltransferase. Positions 332 and 350 each coordinate UDP-N-acetyl-alpha-D-glucosamine. His362 serves as the catalytic Proton acceptor. Residues Tyr365 and Asn376 each coordinate UDP-N-acetyl-alpha-D-glucosamine. Residues Ala379, 385-386 (NY), Ser404, Ala422, and Arg439 each bind acetyl-CoA.

It in the N-terminal section; belongs to the N-acetylglucosamine-1-phosphate uridyltransferase family. In the C-terminal section; belongs to the transferase hexapeptide repeat family. Homotrimer. Requires Mg(2+) as cofactor.

The protein localises to the cytoplasm. It catalyses the reaction alpha-D-glucosamine 1-phosphate + acetyl-CoA = N-acetyl-alpha-D-glucosamine 1-phosphate + CoA + H(+). The catalysed reaction is N-acetyl-alpha-D-glucosamine 1-phosphate + UTP + H(+) = UDP-N-acetyl-alpha-D-glucosamine + diphosphate. The protein operates within nucleotide-sugar biosynthesis; UDP-N-acetyl-alpha-D-glucosamine biosynthesis; N-acetyl-alpha-D-glucosamine 1-phosphate from alpha-D-glucosamine 6-phosphate (route II): step 2/2. It participates in nucleotide-sugar biosynthesis; UDP-N-acetyl-alpha-D-glucosamine biosynthesis; UDP-N-acetyl-alpha-D-glucosamine from N-acetyl-alpha-D-glucosamine 1-phosphate: step 1/1. Its pathway is bacterial outer membrane biogenesis; LPS lipid A biosynthesis. In terms of biological role, catalyzes the last two sequential reactions in the de novo biosynthetic pathway for UDP-N-acetylglucosamine (UDP-GlcNAc). The C-terminal domain catalyzes the transfer of acetyl group from acetyl coenzyme A to glucosamine-1-phosphate (GlcN-1-P) to produce N-acetylglucosamine-1-phosphate (GlcNAc-1-P), which is converted into UDP-GlcNAc by the transfer of uridine 5-monophosphate (from uridine 5-triphosphate), a reaction catalyzed by the N-terminal domain. This Streptococcus uberis (strain ATCC BAA-854 / 0140J) protein is Bifunctional protein GlmU.